The chain runs to 151 residues: Exosporium protein B (151 aa).

Its subcellular location is the spore wall. In Clostridium sporogenes (strain ATCC 15579), this protein is Exosporium protein B.